A 122-amino-acid chain; its full sequence is Histone H2B, gonadal (122 aa).

Positions M1–K31 are disordered. N,N-dimethylproline is present on P2. An O-linked (GlcNAc) serine glycan is attached at S109. K117 is covalently cross-linked (Glycyl lysine isopeptide (Lys-Gly) (interchain with G-Cter in ubiquitin)).

It belongs to the histone H2B family. The nucleosome is a histone octamer containing two molecules each of H2A, H2B, H3 and H4 assembled in one H3-H4 heterotetramer and two H2A-H2B heterodimers. The octamer wraps approximately 147 bp of DNA. Monoubiquitination of Lys-117 gives a specific tag for epigenetic transcriptional activation and is also prerequisite for histone H3 'Lys-4' and 'Lys-79' methylation. Post-translationally, glcNAcylation at Ser-109 promotes monoubiquitination of Lys-117. It fluctuates in response to extracellular glucose, and associates with transcribed genes.

Its subcellular location is the nucleus. The protein resides in the chromosome. In terms of biological role, core component of nucleosome. Nucleosomes wrap and compact DNA into chromatin, limiting DNA accessibility to the cellular machineries which require DNA as a template. Histones thereby play a central role in transcription regulation, DNA repair, DNA replication and chromosomal stability. DNA accessibility is regulated via a complex set of post-translational modifications of histones, also called histone code, and nucleosome remodeling. This Asterias rubens (Common European starfish) protein is Histone H2B, gonadal.